The following is a 572-amino-acid chain: Methionine--tRNA ligase (572 aa).

The 'HIGH' region motif lies at 11-21; that stretch reads PYINGIKHLGN. Zn(2+) contacts are provided by C143, C146, C156, and C159. Residues 346–350 carry the 'KMSKS' region motif; it reads QFSTS. Residue T349 participates in ATP binding.

The protein belongs to the class-I aminoacyl-tRNA synthetase family. MetG type 1 subfamily. Monomer. The cofactor is Zn(2+).

The protein resides in the cytoplasm. It catalyses the reaction tRNA(Met) + L-methionine + ATP = L-methionyl-tRNA(Met) + AMP + diphosphate. Is required not only for elongation of protein synthesis but also for the initiation of all mRNA translation through initiator tRNA(fMet) aminoacylation. The polypeptide is Methionine--tRNA ligase (Dinoroseobacter shibae (strain DSM 16493 / NCIMB 14021 / DFL 12)).